Here is a 214-residue protein sequence, read N- to C-terminus: ATP-dependent Clp protease proteolytic subunit 2 (214 aa).

Catalysis depends on Ser110, which acts as the Nucleophile. His135 is a catalytic residue.

The protein belongs to the peptidase S14 family. Fourteen ClpP subunits assemble into 2 heptameric rings which stack back to back to give a disk-like structure with a central cavity, resembling the structure of eukaryotic proteasomes.

Its subcellular location is the cytoplasm. The catalysed reaction is Hydrolysis of proteins to small peptides in the presence of ATP and magnesium. alpha-casein is the usual test substrate. In the absence of ATP, only oligopeptides shorter than five residues are hydrolyzed (such as succinyl-Leu-Tyr-|-NHMec, and Leu-Tyr-Leu-|-Tyr-Trp, in which cleavage of the -Tyr-|-Leu- and -Tyr-|-Trp bonds also occurs).. Cleaves peptides in various proteins in a process that requires ATP hydrolysis. Has a chymotrypsin-like activity. Plays a major role in the degradation of misfolded proteins. The protein is ATP-dependent Clp protease proteolytic subunit 2 of Mycobacterium leprae (strain TN).